The primary structure comprises 809 residues: Protein TRC8 homolog (809 aa).

11 helical membrane passes run 124 to 144 (TVKF…FMLW), 147 to 167 (HLVM…SYWS), 200 to 220 (VMSL…FAYI), 233 to 253 (MPII…AKVV), 256 to 276 (LPVV…MQSA), 350 to 370 (LVDG…ISMF), 392 to 412 (LGTV…LTSL), 425 to 445 (LCLL…PILM), 461 to 481 (ALSV…HLWS), 488 to 508 (WLLA…VSLA), and 539 to 559 (SVEF…LIFE). Residues 621–659 (CAICYQEMYSAKITRCRHFFHGVCLRKWLYVQDRCPLCH) form an RING-type; atypical zinc finger. Disordered stretches follow at residues 696–724 (NNAA…SSSA) and 752–788 (VASS…TSAA). The span at 711 to 724 (EASEQAPATSSSSA) shows a compositional bias: low complexity.

As to quaternary structure, interacts with VHL. Interacts with the MPN domain of CSN5. Interacts with EIF3F and EIF3H.

Its subcellular location is the endoplasmic reticulum membrane. Its function is as follows. Plays a role in growth inhibition that is dependent upon COP9 signalosome subunits CSN5 and CSN6. May modulate signalosome levels or compartmentalization. Probably functions in the same or a related pathway to VHL during early midline development. The chain is Protein TRC8 homolog from Drosophila melanogaster (Fruit fly).